We begin with the raw amino-acid sequence, 663 residues long: DNA topoisomerase 4 subunit B (663 aa).

ATP contacts are provided by residues Tyr21, Asn61, Asp88, 130-136 (GLHGVGI), and Lys360. The 115-residue stretch at 440–554 (TELFIVEGDS…EGHLYLAKPP (115 aa)) folds into the Toprim domain. 3 residues coordinate Mg(2+): Glu446, Asp519, and Asp521.

Belongs to the type II topoisomerase family. ParE type 1 subfamily. In terms of assembly, heterotetramer composed of ParC and ParE. Requires Mg(2+) as cofactor. Mn(2+) serves as cofactor. It depends on Ca(2+) as a cofactor.

It catalyses the reaction ATP-dependent breakage, passage and rejoining of double-stranded DNA.. In terms of biological role, topoisomerase IV is essential for chromosome segregation. It relaxes supercoiled DNA. Performs the decatenation events required during the replication of a circular DNA molecule. This chain is DNA topoisomerase 4 subunit B, found in Rickettsia typhi (strain ATCC VR-144 / Wilmington).